Here is a 325-residue protein sequence, read N- to C-terminus: Isoaspartyl peptidase/L-asparaginase (325 aa).

The active-site Nucleophile is threonine 193. Substrate-binding positions include 221 to 224 (RIGD) and 243 to 246 (TGKG).

Belongs to the Ntn-hydrolase family. In terms of assembly, heterotetramer of two alpha and two beta chains arranged as a dimer of alpha/beta heterodimers. Cleaved into an alpha and beta chain by autocatalysis; this activates the enzyme. The N-terminal residue of the beta subunit is responsible for the nucleophile hydrolase activity. In terms of tissue distribution, expressed in ripening seeds and developing nodules.

The enzyme catalyses Cleavage of a beta-linked Asp residue from the N-terminus of a polypeptide.. Degrades proteins damaged by L-isoaspartyl residue formation (also known as beta-Asp residues). Also has L-asparaginase activity, which is used to liberate stored nitrogen during seed development. The polypeptide is Isoaspartyl peptidase/L-asparaginase (Lupinus luteus (European yellow lupine)).